Here is a 119-residue protein sequence, read N- to C-terminus: Large ribosomal subunit protein uL18 (119 aa).

The protein belongs to the universal ribosomal protein uL18 family. In terms of assembly, part of the 50S ribosomal subunit; part of the 5S rRNA/L5/L18/L25 subcomplex. Contacts the 5S and 23S rRNAs.

Functionally, this is one of the proteins that bind and probably mediate the attachment of the 5S RNA into the large ribosomal subunit, where it forms part of the central protuberance. The sequence is that of Large ribosomal subunit protein uL18 from Cupriavidus necator (strain ATCC 17699 / DSM 428 / KCTC 22496 / NCIMB 10442 / H16 / Stanier 337) (Ralstonia eutropha).